A 305-amino-acid polypeptide reads, in one-letter code: Glutaminase (305 aa).

The substrate site is built by Ser-63, Asn-113, Glu-158, Asn-165, Tyr-189, Tyr-241, and Val-259.

This sequence belongs to the glutaminase family. As to quaternary structure, homotetramer.

It catalyses the reaction L-glutamine + H2O = L-glutamate + NH4(+). This Aliarcobacter butzleri (strain RM4018) (Arcobacter butzleri) protein is Glutaminase.